A 307-amino-acid chain; its full sequence is Probable RuBisCO transcriptional regulator (307 aa).

The HTH lysR-type domain occupies 5–62; the sequence is FTLQQLRIFKAIASEKSFTQAAEILFVSQPSLSKQIKTLENRLGILLLNRTGNKILLT. Positions 22 to 41 form a DNA-binding region, H-T-H motif; that stretch reads FTQAAEILFVSQPSLSKQIK.

It belongs to the LysR transcriptional regulatory family.

Its subcellular location is the plastid. The protein localises to the chloroplast. Functionally, trans-acting transcriptional regulator of RuBisCO genes (rbcL and rbcS) expression. In Thalassiosira pseudonana (Marine diatom), this protein is Probable RuBisCO transcriptional regulator (rbcR-A).